A 927-amino-acid chain; its full sequence is Autophagy-related protein 13 (927 aa).

Disordered stretches follow at residues 1-66 (MHQQ…PPAD), 334-359 (SLPQ…RSKP), 388-559 (LRSV…AQPG), 628-716 (TESM…TIRE), and 786-927 (QMQL…RRGW). Polar residues predominate over residues 14–30 (PGATTQPNLPSRSNSTR). 3 stretches are compositionally biased toward polar residues: residues 393–402 (QPGSDTSSPP), 513–523 (PASTSRYSSSF), and 544–557 (GSSG…SVAQ). A compositionally biased stretch (low complexity) spans 630–671 (SMTSSVQMQRSSSSSSRQLTSVPGMTAPASVSASSSPGKPLS). Residues 684 to 716 (LSENSIIDYSGQGRITSRQGRTSDNTQPGTIRE) are compositionally biased toward polar residues. Residues 793-803 (STQRPSDRLEP) show a composition bias toward basic and acidic residues. Over residues 850–868 (HKQTPPQSSRGSFNGSLNR) the composition is skewed to polar residues. The segment covering 891–901 (PQGRRSIEEAR) has biased composition (basic and acidic residues).

This sequence belongs to the ATG13 family. Fungi subfamily. As to quaternary structure, hypophosphorylated form interacts with ATG1 to form the ATG1-ATG13 kinase complex. The ATG1-ATG13 complex interacts with the ATG17-ATG29-ATG31 complex through direct interaction with ATG17.

It localises to the cytoplasm. Its subcellular location is the preautophagosomal structure. Functionally, activates the ATG1 kinase in a nutritional condition dependent manner through the TOR pathway, leading to autophagy. Involved in ATG9 and ATG23 cycling through the pre-autophagosomal structure. Also involved in cytoplasm to vacuole transport (Cvt) and more specifically in Cvt vesicle formation. Seems to play a role in the switching machinery regulating the conversion between the Cvt pathway and autophagy. Finally, ATG13 is also required for glycogen storage during stationary phase. Autophagy is required for proper vegetative growth, asexual/sexual reproduction, and full virulence. Autophagy is particularly involved in the biosynthesis of deoxynivalenol (DON), an important virulence determinant. This chain is Autophagy-related protein 13, found in Gibberella zeae (strain ATCC MYA-4620 / CBS 123657 / FGSC 9075 / NRRL 31084 / PH-1) (Wheat head blight fungus).